The following is a 1575-amino-acid chain: Ras GTPase-activating-like protein IQGAP2 (1575 aa).

At S16 the chain carries Phosphoserine. Residues L41–L156 enclose the Calponin-homology (CH) domain. T356 is modified (phosphothreonine). Residues E594–L627 enclose the WW domain. S595 and S599 each carry phosphoserine. 3 IQ domains span residues Q690–G719, N720–D749, and H750–P779. 4 positions are modified to phosphothreonine: T782, T881, T1002, and T1269. Positions Y933 to A1182 constitute a Ras-GAP domain. S1279 and S1461 each carry phosphoserine.

Its function is as follows. Binds to activated CDC42 and RAC1 but does not seem to stimulate their GTPase activity. Associates with calmodulin. This Mus musculus (Mouse) protein is Ras GTPase-activating-like protein IQGAP2 (Iqgap2).